The chain runs to 346 residues: MVGGGAKRRLRGEGPQCEKPVDMKKSKSCEADVPGDLRKEVESHYRLPLPEDFYHFWRFCEGLDPEQPADSLSASLGLRLVGPYDILAGKHKIKKKSASLNFNLHWRFYYDPPEFQTIIIGDSKTQFHMGYFRDSPDELPVFVGTNEAKKNCIIVQSGDNVFAAVKLFLMKKLKEVTDKKKSSLLKTIDEKLTEAARELGFSLEQRTVRMKQRDKKVVTKTFHGAGLVVPVDKNDVGYRELPETDASLRRICGTIVEAPSDADRLQAFAPVQEMMTYVQFANDECDYGMGLELGLDLFCHGSHYFHKVAGQLLPLAYNLLKRNLFAEIIEAHLANRSQDDVDQLAA.

M1 carries the post-translational modification N-acetylmethionine. The span at 1 to 10 shows a compositional bias: basic residues; that stretch reads MVGGGAKRRL. The tract at residues 1-29 is disordered; sequence MVGGGAKRRLRGEGPQCEKPVDMKKSKSC. N6-acetyllysine is present on K19. Positions 19 to 29 are enriched in basic and acidic residues; the sequence is KPVDMKKSKSC. Position 97 is an ADP-ribosylserine (S97). An N6-acetyllysine mark is found at K186 and K233. D235 is modified (polyADP-ribosyl aspartic acid). Position 238 is an ADP-ribosyltyrosine (Y238). E240 is modified (polyADP-ribosyl glutamic acid). An interaction with PARP1 region spans residues 242-346; the sequence is PETDASLRRI…SQDDVDQLAA (105 aa). The active-site Proton donor is E284.

Belongs to the HPF1 family. Interacts with PARP1 (via the PARP catalytic domain). Interacts with PARP2 (via the PARP catalytic domain). Interacts with core nucleosomes in a PARP1- and PARP2-dependent manner.

The protein resides in the chromosome. Its subcellular location is the nucleus. Functionally, cofactor for serine ADP-ribosylation that confers serine specificity on PARP1 and PARP2 and plays a key role in DNA damage response. Initiates the repair of double-strand DNA breaks: recruited to DNA damage sites by PARP1 and PARP2 and switches the amino acid specificity of PARP1 and PARP2 from aspartate or glutamate to serine residues, licensing serine ADP-ribosylation of target proteins. Serine ADP-ribosylation of target proteins, such as histones, promotes decompaction of chromatin and the recruitment of repair factors leading to the reparation of DNA strand breaks. Serine ADP-ribosylation of proteins constitutes the primary form of ADP-ribosylation of proteins in response to DNA damage. HPF1 acts by completing the active site of PARP1 and PARP2: forms a composite active site composed of residues from HPF1 and PARP1 or PARP2. While HPF1 promotes the initiation of serine ADP-ribosylation, it restricts the polymerase activity of PARP1 and PARP2 in order to limit the length of poly-ADP-ribose chains. HPF1 also promotes tyrosine ADP-ribosylation, probably by conferring tyrosine specificity on PARP1. In Bos taurus (Bovine), this protein is Histone PARylation factor 1.